The sequence spans 1709 residues: Sialoadhesin (1709 aa).

An N-terminal signal peptide occupies residues methionine 1–alanine 19. The region spanning serine 20–threonine 136 is the Ig-like V-type domain. Over serine 20–glutamine 1641 the chain is Extracellular. Intrachain disulfides connect cysteine 36–cysteine 166, cysteine 41–cysteine 98, cysteine 160–cysteine 217, and cysteine 262–cysteine 305. Residues tyrosine 63, arginine 116, and valine 122–serine 126 contribute to the N-acetylneuraminate site. 12 Ig-like C2-type domains span residues proline 139–glutamine 233, proline 238–serine 320, alanine 326–serine 405, proline 411–histidine 507, alanine 511–threonine 593, proline 601–asparagine 705, alanine 708–serine 785, proline 799–arginine 894, valine 898–serine 977, proline 984–aspartate 1083, glutamine 1085–threonine 1165, and arginine 1176–glycine 1248. Asparagine 159 is a glycosylation site (N-linked (GlcNAc...) asparagine). Residues asparagine 265 and asparagine 339 are each glycosylated (N-linked (GlcNAc...) asparagine). Cystine bridges form between cysteine 346-cysteine 390 and cysteine 433-cysteine 491. Asparagine 499 carries N-linked (GlcNAc...) asparagine glycosylation. 2 disulfides stabilise this stretch: cysteine 531–cysteine 575 and cysteine 624–cysteine 689. N-linked (GlcNAc...) asparagine glycosylation is found at asparagine 697, asparagine 726, asparagine 730, and asparagine 741. 2 cysteine pairs are disulfide-bonded: cysteine 729/cysteine 774 and cysteine 817/cysteine 876. A glycan (N-linked (GlcNAc...) asparagine) is linked at asparagine 886. 2 disulfides stabilise this stretch: cysteine 916–cysteine 960 and cysteine 1005–cysteine 1067. N-linked (GlcNAc...) asparagine glycans are attached at residues asparagine 1104 and asparagine 1138. 2 cysteine pairs are disulfide-bonded: cysteine 1107–cysteine 1149 and cysteine 1193–cysteine 1241. Residue asparagine 1251 is glycosylated (N-linked (GlcNAc...) asparagine). 4 consecutive Ig-like C2-type domains span residues glutamate 1259–glutamine 1341, valine 1350–valine 1442, alanine 1445–arginine 1528, and proline 1536–arginine 1631. 2 disulfides stabilise this stretch: cysteine 1281–cysteine 1324 and cysteine 1367–cysteine 1425. N-linked (GlcNAc...) asparagine glycans are attached at residues asparagine 1462 and asparagine 1476. 2 disulfide bridges follow: cysteine 1465–cysteine 1511 and cysteine 1554–cysteine 1613. Residues leucine 1642 to cysteine 1662 form a helical membrane-spanning segment. Residues tyrosine 1663–glycine 1709 lie on the Cytoplasmic side of the membrane.

This sequence belongs to the immunoglobulin superfamily. SIGLEC (sialic acid binding Ig-like lectin) family. As to quaternary structure, interacts with TYROBP. Interacts with CLEC10A. As to expression, expressed by macrophages in various tissues. High levels are found in spleen, lymph node, perivascular macrophages in brain and lower levels in bone marrow, liver Kupffer cells and lamina propria of colon and lung. Also expressed by inflammatory macrophages in rheumatoid arthritis.

The protein resides in the cell membrane. It localises to the secreted. Functionally, macrophage-restricted adhesion molecule that mediates sialic-acid dependent binding to lymphocytes, including granulocytes, monocytes, natural killer cells, B-cells and CD8 T-cells. Plays a crucial role in limiting bacterial dissemination by engaging sialylated bacteria to promote effective phagocytosis and antigen presentation for the adaptive immune response. Mediates the uptake of various enveloped viruses via sialic acid recognition and subsequently induces the formation of intracellular compartments filled with virions (VCCs). In turn, enhances macrophage-to-T-cell transmission of several viruses including HIV-1 or SARS-CoV-2. Acts as an endocytic receptor mediating clathrin dependent endocytosis. Preferentially binds to alpha-2,3-linked sialic acid. Binds to SPN/CD43 on T-cells. May play a role in hemopoiesis. Plays a role in the inhibition of antiviral innate immune by promoting TBK1 degradation via TYROBP and TRIM27-mediated ubiquitination. (Microbial infection) Facilitates viral cytoplasmic entry into activated dendritic cells via recognition of sialylated gangliosides pesent on viral membrane. The chain is Sialoadhesin (SIGLEC1) from Homo sapiens (Human).